The following is a 420-amino-acid chain: Dual-specificity RNA methyltransferase RlmN (420 aa).

Glutamate 115 functions as the Proton acceptor in the catalytic mechanism. The Radical SAM core domain maps to 121-388 (DADRGTLCVS…APIRTPRGRD (268 aa)). Cysteine 128 and cysteine 393 are disulfide-bonded. 3 residues coordinate [4Fe-4S] cluster: cysteine 135, cysteine 139, and cysteine 142. S-adenosyl-L-methionine is bound by residues 217–218 (GE), serine 249, 271–273 (SLH), and asparagine 350. Residue cysteine 393 is the S-methylcysteine intermediate of the active site.

The protein belongs to the radical SAM superfamily. RlmN family. [4Fe-4S] cluster serves as cofactor.

It localises to the cytoplasm. It catalyses the reaction adenosine(2503) in 23S rRNA + 2 reduced [2Fe-2S]-[ferredoxin] + 2 S-adenosyl-L-methionine = 2-methyladenosine(2503) in 23S rRNA + 5'-deoxyadenosine + L-methionine + 2 oxidized [2Fe-2S]-[ferredoxin] + S-adenosyl-L-homocysteine. It carries out the reaction adenosine(37) in tRNA + 2 reduced [2Fe-2S]-[ferredoxin] + 2 S-adenosyl-L-methionine = 2-methyladenosine(37) in tRNA + 5'-deoxyadenosine + L-methionine + 2 oxidized [2Fe-2S]-[ferredoxin] + S-adenosyl-L-homocysteine. Specifically methylates position 2 of adenine 2503 in 23S rRNA and position 2 of adenine 37 in tRNAs. m2A2503 modification seems to play a crucial role in the proofreading step occurring at the peptidyl transferase center and thus would serve to optimize ribosomal fidelity. The chain is Dual-specificity RNA methyltransferase RlmN from Sphingopyxis alaskensis (strain DSM 13593 / LMG 18877 / RB2256) (Sphingomonas alaskensis).